A 570-amino-acid polypeptide reads, in one-letter code: FERM domain-containing protein 5 (570 aa).

The FERM domain maps to 17 to 298 (YSCTVRLLDD…ENQAFYKLEK (282 aa)). Residues 308-353 (SNLFFKGSRFRYSGRVAKEVMESSAKIKREPPEIHRAGMVPSRSCP) form an interaction with ROCK1 region. Residues 344-367 (AGMVPSRSCPSITHGPRLSSVPRT) are disordered. At S375 the chain carries Phosphoserine. A disordered region spans residues 385-407 (DSAHSTPVRSTSHGDTFLPHVRS). Positions 388-398 (HSTPVRSTSHG) are enriched in polar residues. Residues 504 to 524 (LLLVTMGLLFVLLLLLIILTE) traverse the membrane as a helical segment.

Interacts with CTNND1. Interacts with ITGB5 (via cytoplasmic domain) and ROCK1.

The protein localises to the membrane. Its subcellular location is the cell junction. It localises to the adherens junction. Its function is as follows. May be involved in regulation of cell migration. May regulate cell-matrix interactions via its interaction with ITGB5 and modifying ITGB5 cytoplasmic tail interactions such as with FERMT2 and TLN1. May regulate ROCK1 kinase activity possibly involved in regulation of actin stress fiber formation. This chain is FERM domain-containing protein 5 (FRMD5), found in Homo sapiens (Human).